A 314-amino-acid polypeptide reads, in one-letter code: MKEKLVAIVGPTAVGKTKTSVMLAKRLNGEVISGDSMQVYRGMDIGTAKITAEEMDGVPHHLIDIKDPSESFSVADFQDLATPLITEIHERGRLPFLVGGTGLYVNAVIHQFNLGDIRADEDYRHELEAFVNSYGVQALHDKLSKIDPKAAAAIHPNNYRRVIRALEIIKLTGKTVTEQARHEEETPSPYNLVMIGLTMERDVLYDRINRRVDQMVEEGLIDEAKKLYDRGIRDCQSVQAIGYKEMYDYLDGNVTLEEAIDTLKRNSRRYAKRQLTWFRNKANVTWFDMTDVDFDKKIMEIHNFIAGKLEEKSK.

Residue 10 to 17 coordinates ATP; that stretch reads GPTAVGKT. Residue 12–17 coordinates substrate; sequence TAVGKT. Interaction with substrate tRNA stretches follow at residues 35 to 38, 160 to 164, 239 to 244, and 272 to 279; these read DSMQ, RRVIR, QAIGYK, and KRQLTWFR.

Belongs to the IPP transferase family. As to quaternary structure, monomer. It depends on Mg(2+) as a cofactor.

The enzyme catalyses adenosine(37) in tRNA + dimethylallyl diphosphate = N(6)-dimethylallyladenosine(37) in tRNA + diphosphate. Functionally, catalyzes the transfer of a dimethylallyl group onto the adenine at position 37 in tRNAs that read codons beginning with uridine, leading to the formation of N6-(dimethylallyl)adenosine (i(6)A). The sequence is that of tRNA dimethylallyltransferase (miaA) from Halalkalibacterium halodurans (strain ATCC BAA-125 / DSM 18197 / FERM 7344 / JCM 9153 / C-125) (Bacillus halodurans).